The chain runs to 128 residues: Large ribosomal subunit protein bL12 (128 aa).

It belongs to the bacterial ribosomal protein bL12 family. As to quaternary structure, homodimer. Part of the ribosomal stalk of the 50S ribosomal subunit. Forms a multimeric L10(L12)X complex, where L10 forms an elongated spine to which 2 to 4 L12 dimers bind in a sequential fashion. Binds GTP-bound translation factors.

Functionally, forms part of the ribosomal stalk which helps the ribosome interact with GTP-bound translation factors. Is thus essential for accurate translation. This chain is Large ribosomal subunit protein bL12, found in Streptomyces antibioticus.